The sequence spans 143 residues: ATP synthase subunit b' (143 aa).

Residues 6–26 (ATLPLMALQFVVLAFLLNAIF) traverse the membrane as a helical segment.

This sequence belongs to the ATPase B chain family. F-type ATPases have 2 components, F(1) - the catalytic core - and F(0) - the membrane proton channel. F(1) has five subunits: alpha(3), beta(3), gamma(1), delta(1), epsilon(1). F(0) has four main subunits: a(1), b(1), b'(1) and c(10-14). The alpha and beta chains form an alternating ring which encloses part of the gamma chain. F(1) is attached to F(0) by a central stalk formed by the gamma and epsilon chains, while a peripheral stalk is formed by the delta, b and b' chains.

The protein localises to the cellular thylakoid membrane. Its function is as follows. F(1)F(0) ATP synthase produces ATP from ADP in the presence of a proton or sodium gradient. F-type ATPases consist of two structural domains, F(1) containing the extramembraneous catalytic core and F(0) containing the membrane proton channel, linked together by a central stalk and a peripheral stalk. During catalysis, ATP synthesis in the catalytic domain of F(1) is coupled via a rotary mechanism of the central stalk subunits to proton translocation. Functionally, component of the F(0) channel, it forms part of the peripheral stalk, linking F(1) to F(0). The b'-subunit is a diverged and duplicated form of b found in plants and photosynthetic bacteria. This is ATP synthase subunit b' from Synechocystis sp. (strain ATCC 27184 / PCC 6803 / Kazusa).